Reading from the N-terminus, the 486-residue chain is Bile acid receptor (486 aa).

Lys132 participates in a covalent cross-link: Glycyl lysine isopeptide (Lys-Gly) (interchain with G-Cter in SUMO1). A DNA-binding region (nuclear receptor) is located at residues 134–209; that stretch reads DELCVVCGDR…MGMLAECMYT (76 aa). Residues 137–157 form an NR C4-type zinc finger; sequence CVVCGDRASGYHYNALTCEGC. A phosphoserine; by PKC/PRKCA mark is found at Ser145 and Ser164. Lys167 is modified (N6-acetyllysine; by EP300). The NR C4-type zinc-finger motif lies at 173 to 197; sequence CKNGGNCVMDMYMRRKCQECRLRKC. Lys220 is modified (N6-methyllysine; by SETD7). At Lys227 the chain carries N6-acetyllysine; by EP300. One can recognise an NR LBD domain in the interval 262–486; sequence DQQTLLHFIM…PLLCEIWDVQ (225 aa). A Glycyl lysine isopeptide (Lys-Gly) (interchain with G-Cter in SUMO1) cross-link involves residue Lys289. Residues Arg345, Tyr375, and Tyr383 each coordinate chenodeoxycholate. Thr456 is modified (phosphothreonine; by PKC/PRKCZ). His461 serves as a coordination point for chenodeoxycholate.

Belongs to the nuclear hormone receptor family. NR1 subfamily. In terms of assembly, heterodimer (via C-terminus) with RXRA (via DBD); the heterodimerization enhances the binding affinity for LXXLL motifs from coactivators. Binds DNA predominantly as a heterodimer with RXRA. After activation by agonist binding interacts with coactivators. Interacts with NCOA1, NCOA2, PPARGC1A, CARM1, SETD7, PRMT1, GPS2, SMARCA4 and MED1. Interacts with EP300 and SMARCD1. Interacts with XRCC5 and XRCC6; decreasing NR1H4/FXR transactivation activity towards ABCB11/BSEP. Interacts with PAGR1 and NCOA6; indicative for an association with an MLL2/MLL3 complex (ASCOM). In terms of processing, acetylated by EP300. Lys-227 as is the major acetylation site for EP300; the dynamicly regulated acetylation inhibits heterodimerization with RXRA and transactivation activity. Deacetylated by SIRT1. Post-translationally, methylation may increase transactivation of target genes. Phosphorylation by PKC/PRKCA increases transactivation activity by promoting association with PPARGC1A. In terms of processing, sumoylated upon ligand binding. As to expression, liver and hepatocyte-related cells express mainly FXRalpha1-type isoforms with isoform 3 and isoform 4 in approximately equal proportions. In intestine and kidney mainly FXRalpha2-type isoforms are expressed with isoform 1 and isoform 2 in approximately equal proportions. Expressed in pancreatic beta cells and macrophages.

The protein localises to the nucleus. Functionally, ligand-activated transcription factor. Receptor for bile acids (BAs) such as chenodeoxycholic acid (CDCA), lithocholic acid, deoxycholic acid (DCA) and allocholic acid (ACA). Plays a essential role in BA homeostasis through the regulation of genes involved in BA synthesis, conjugation and enterohepatic circulation. Also regulates lipid and glucose homeostasis and is involved innate immune response. The FXR-RXR heterodimer binds predominantly to farnesoid X receptor response elements (FXREs) containing two inverted repeats of the consensus sequence 5'-AGGTCA-3' in which the monomers are spaced by 1 nucleotide (IR-1) but also to tandem repeat DR1 sites with lower affinity, and can be activated by either FXR or RXR-specific ligands. It is proposed that monomeric nuclear receptors such as NR5A2/LRH-1 bound to coregulatory nuclear responsive element (NRE) halfsites located in close proximity to FXREs modulate transcriptional activity. In the liver activates transcription of the corepressor NR0B2 thereby indirectly inhibiting CYP7A1 and CYP8B1 (involved in BA synthesis) implicating at least in part histone demethylase KDM1A resulting in epigenomic repression, and SLC10A1/NTCP (involved in hepatic uptake of conjugated BAs). Activates transcription of the repressor MAFG (involved in regulation of BA synthesis). Activates transcription of SLC27A5/BACS and BAAT (involved in BA conjugation), ABCB11/BSEP (involved in bile salt export) by directly recruiting histone methyltransferase CARM1, and ABCC2/MRP2 (involved in secretion of conjugated BAs) and ABCB4 (involved in secretion of phosphatidylcholine in the small intestine). Activates transcription of SLC27A5/BACS and BAAT (involved in BA conjugation), ABCB11/BSEP (involved in bile salt export) by directly recruiting histone methyltransferase CARM1, and ABCC2/MRP2 (involved in secretion of conjugated BAs) and ABCB4 (involved in secretion of phosphatidylcholine in the small intestine). In the intestine activates FGF19 expression and secretion leading to hepatic CYP7A1 repression. The function also involves the coordinated induction of hepatic KLB/beta-klotho expression. Regulates transcription of liver UGT2B4 and SULT2A1 involved in BA detoxification; binding to the UGT2B4 promoter seems to imply a monomeric transactivation independent of RXRA. Modulates lipid homeostasis by activating liver NR0B2/SHP-mediated repression of SREBF1 (involved in de novo lipogenesis), expression of PLTP (involved in HDL formation), SCARB1 (involved in HDL hepatic uptake), APOE, APOC1, APOC4, PPARA (involved in beta-oxidation of fatty acids), VLDLR and SDC1 (involved in the hepatic uptake of LDL and IDL remnants), and inhibiting expression of MTTP (involved in VLDL assembly. Increases expression of APOC2 (promoting lipoprotein lipase activity implicated in triglyceride clearance). Transrepresses APOA1 involving a monomeric competition with NR2A1 for binding to a DR1 element. Also reduces triglyceride clearance by inhibiting expression of ANGPTL3 and APOC3 (both involved in inhibition of lipoprotein lipase). Involved in glucose homeostasis by modulating hepatic gluconeogenesis through activation of NR0B2/SHP-mediated repression of respective genes. Modulates glycogen synthesis (inducing phosphorylation of glycogen synthase kinase-3). Modulates glucose-stimulated insulin secretion and is involved in insulin resistance. Involved in intestinal innate immunity. Plays a role in protecting the distal small intestine against bacterial overgrowth and preservation of the epithelial barrier. Down-regulates inflammatory cytokine expression in several types of immune cells including macrophages and mononuclear cells. Mediates trans-repression of TLR4-induced cytokine expression; the function seems to require its sumoylation and prevents N-CoR nuclear receptor corepressor clearance from target genes such as IL1B and NOS2. Involved in the TLR9-mediated protective mechanism in intestinal inflammation. Plays an anti-inflammatory role in liver inflammation; proposed to inhibit pro-inflammatory (but not antiapoptotic) NF-kappa-B signaling). Promotes transcriptional activation of target genes NR0B2/SHP (inducible by unconjugated CDCA), SLC51B/OSTB (inducible by unconjugated CDCA and DCA) and FABP6/IBAP; low activity for ABCB11/BSEP (inducible by unconjugated CDCA, DCA and ACA); not inducible by taurine- and glycine-amidated CDCA. In terms of biological role, promotes transcriptional activation of target genes ABCB11/BSEP (inducible by unconjugated CDCA, DCA and ACA), NR0B2/SHP (inducible by unconjugated CDCA DCA and ACA), SLC51B/OSTB (inducible by unconjugated CDCA and DCA) and FABP6/IBAP; not inducible by taurine- and glycine-amidated CDCA. Its function is as follows. Promotes transcriptional activation of target genes NR0B2/SHP (inducible by unconjugated CDCA), SLC51B/OSTB (inducible by unconjugated CDCA and DCA) and IBAP; low activity for ABCB11/BSEP (inducible by unconjugated CDCA, DCA and ACA); not inducible by taurine- and glycine-amidated CDCA. Functionally, promotes transcriptional activation of target genes ABCB11/BSEP (inducible by unconjugated CDCA, ACA and DCA), NR0B2/SHP (inducible by unconjugated CDCA, ACA and DCA), SLC51B/OSTB (inducible by unconjugated CDCA and DCA) and FABP6/IBAP; most efficient isoform compared to isoforms 1 to 3; not inducible by taurine- and glycine-amidated CDCA. This chain is Bile acid receptor (NR1H4), found in Homo sapiens (Human).